Consider the following 136-residue polypeptide: Small ribosomal subunit protein uS12 (136 aa).

The disordered stretch occupies residues M1–P28. Position 89 is a 3-methylthioaspartic acid (D89). The interval T101 to R136 is disordered. Residues G113 to K123 are compositionally biased toward basic residues.

It belongs to the universal ribosomal protein uS12 family. Part of the 30S ribosomal subunit. Contacts proteins S8 and S17. May interact with IF1 in the 30S initiation complex.

Functionally, with S4 and S5 plays an important role in translational accuracy. In terms of biological role, interacts with and stabilizes bases of the 16S rRNA that are involved in tRNA selection in the A site and with the mRNA backbone. Located at the interface of the 30S and 50S subunits, it traverses the body of the 30S subunit contacting proteins on the other side and probably holding the rRNA structure together. The combined cluster of proteins S8, S12 and S17 appears to hold together the shoulder and platform of the 30S subunit. This Cyanothece sp. (strain PCC 7425 / ATCC 29141) protein is Small ribosomal subunit protein uS12.